The sequence spans 277 residues: 3-methyl-2-oxobutanoate hydroxymethyltransferase (277 aa).

2 residues coordinate Mg(2+): Asp54 and Asp93. 3-methyl-2-oxobutanoate is bound by residues 54–55 (DS), Asp93, and Lys122. Glu124 contributes to the Mg(2+) binding site. The Proton acceptor role is filled by Glu191.

The protein belongs to the PanB family. Homodecamer; pentamer of dimers. The cofactor is Mg(2+).

It is found in the cytoplasm. The catalysed reaction is 3-methyl-2-oxobutanoate + (6R)-5,10-methylene-5,6,7,8-tetrahydrofolate + H2O = 2-dehydropantoate + (6S)-5,6,7,8-tetrahydrofolate. It participates in cofactor biosynthesis; (R)-pantothenate biosynthesis; (R)-pantoate from 3-methyl-2-oxobutanoate: step 1/2. In terms of biological role, catalyzes the reversible reaction in which hydroxymethyl group from 5,10-methylenetetrahydrofolate is transferred onto alpha-ketoisovalerate to form ketopantoate. This chain is 3-methyl-2-oxobutanoate hydroxymethyltransferase, found in Alkalilimnicola ehrlichii (strain ATCC BAA-1101 / DSM 17681 / MLHE-1).